The following is a 122-amino-acid chain: Acidic phospholipase A2 CbIalpha (122 aa).

Disulfide bonds link Cys26–Cys115, Cys28–Cys44, Cys43–Cys95, Cys49–Cys122, Cys50–Cys88, Cys57–Cys81, and Cys75–Cys86. Ca(2+) contacts are provided by Tyr27, Gly29, and Gly31. Residue His47 is part of the active site. Asp48 provides a ligand contact to Ca(2+). Asp89 is an active-site residue.

Belongs to the phospholipase A2 family. Group II subfamily. D49 sub-subfamily. As to quaternary structure, heterodimer of an acidic subunit (CbIalpha or CbIbeta) and a basic subunit (CbII). The acidic subunit is non-toxic, and increases the toxicity of the basic subunit. Ca(2+) serves as cofactor. Expressed by the venom gland.

The protein localises to the secreted. It carries out the reaction a 1,2-diacyl-sn-glycero-3-phosphocholine + H2O = a 1-acyl-sn-glycero-3-phosphocholine + a fatty acid + H(+). Heterodimer: presynaptic neurotoxin. Its function is as follows. Monomer: Snake venom phospholipase A2 (PLA2) is inactive towards micellar phosphatidylcholine but is weakly active towards non-micellar dithiolecithin. PLA2 catalyzes the calcium-dependent hydrolysis of the 2-acyl groups in 3-sn-phosphoglycerides. The polypeptide is Acidic phospholipase A2 CbIalpha (Pseudocerastes fieldi (Field's horned viper)).